The primary structure comprises 559 residues: MNPLFGPNLFLLQQEQQGLAGPLGDSLGGDHFAGGGDLPPAPLSPAGPAAYSPPGPGPAPPAAMALRNDLGSNINVLKTLNLRFRCFLAKVHELERRNRLLEKQLQQALEEGKQGRRGLGRRDQAVQTGFVSPIRPLGLQLGARPAAVCSPSARVLGSPARSPAGPLAPSAASLSSSSTSTSTTYSSSARFMPGTIWSFSHARRLGPGLEPTLVQGPGLSWVHPDGVGVQIDTITPEIRALYNVLAKVKRERDEYKRRWEEEYTVRIQLQDRVNELQEEAQEADACQEELALKVEQLKAELVVFKGLMSNNLSELDTKIQEKAMKVDMDICRRIDITAKLCDVAQQRNCEDMIQMFQVPSMGGRKRERKAAVEEDTSLSESEGPRQPDGDEEESTALSINEEMQRMLNQLREYDFEDDCDSLTWEETEETLLLWEDFSGYAMAAAEAQGEQEDSLEKVIKDTESLFKTREKEYQETIDQIELELATAKNDMNRHLHEYMEMCSMKRGLDVQMETCRRLITQSGDRKSPAFTAVPLSDPPPPPSEAEDSDRDVSSDSSMR.

Residues 21–57 (GPLGDSLGGDHFAGGGDLPPAPLSPAGPAAYSPPGPG) form a disordered region. Residues 39–57 (PPAPLSPAGPAAYSPPGPG) show a composition bias toward pro residues. Residues 65-116 (ALRNDLGSNINVLKTLNLRFRCFLAKVHELERRNRLLEKQLQQALEEGKQGR) are LMNA binding. The IF rod domain maps to 73–526 (NINVLKTLNL…RLITQSGDRK (454 aa)). Positions 85 to 117 (RCFLAKVHELERRNRLLEKQLQQALEEGKQGRR) form a coiled coil. A disordered region spans residues 158–187 (SPARSPAGPLAPSAASLSSSSTSTSTTYSS). Positions 237 to 301 (EIRALYNVLA…LKVEQLKAEL (65 aa)) form a coiled coil. The interval 360-394 (SMGGRKRERKAAVEEDTSLSESEGPRQPDGDEEES) is disordered. The tract at residues 450–525 (EQEDSLEKVI…RRLITQSGDR (76 aa)) is XCCR4 binding. Required for localization to the double-strand breaks (DSBs). Residues 455–501 (LEKVIKDTESLFKTREKEYQETIDQIELELATAKNDMNRHLHEYMEM) adopt a coiled-coil conformation. Positions 520–559 (TQSGDRKSPAFTAVPLSDPPPPPSEAEDSDRDVSSDSSMR) are disordered. Basic and acidic residues predominate over residues 550-559 (RDVSSDSSMR).

The protein belongs to the intermediate filament family. As to quaternary structure, forms a heterotetramer with XRCC4. The interaction with XRCC4 is direct, involves LIG4-free XRCC4 and leads to relocalization of IFFO1 at the double-strand break (DSB) sites. Interacts with LMNA; the interaction forms an interior nucleoskeleton and the recruitment to DNA double-strand breaks. As to expression, ubiquitously expressed.

It is found in the nucleus. The protein localises to the nucleoplasm. It localises to the nucleus inner membrane. The protein resides in the nucleus matrix. Nuclear matrix protein involved in the immobilization of broken DNA ends and the suppression of chromosome translocation during DNA double-strand breaks (DSBs). Interacts with the nuclear lamina component LMNA, resulting in the formation of a nucleoskeleton that relocalizes to the DSB sites in a XRCC4-dependent manner and promotes the immobilization of the broken ends, thereby preventing chromosome translocation. Acts as a scaffold that allows the DNA repair protein XRCC4 and LMNA to assemble into a complex at the DSB sites. This Homo sapiens (Human) protein is Non-homologous end joining factor IFFO1.